Reading from the N-terminus, the 61-residue chain is Small ribosomal subunit protein uS14 (61 aa).

Cys24, Cys27, Cys40, and Cys43 together coordinate Zn(2+).

Belongs to the universal ribosomal protein uS14 family. Zinc-binding uS14 subfamily. In terms of assembly, part of the 30S ribosomal subunit. Contacts proteins S3 and S10. It depends on Zn(2+) as a cofactor.

Functionally, binds 16S rRNA, required for the assembly of 30S particles and may also be responsible for determining the conformation of the 16S rRNA at the A site. The sequence is that of Small ribosomal subunit protein uS14 from Anaeromyxobacter dehalogenans (strain 2CP-1 / ATCC BAA-258).